The following is a 242-amino-acid chain: Ubiquinone/menaquinone biosynthesis C-methyltransferase UbiE (242 aa).

S-adenosyl-L-methionine is bound by residues Thr69, Asp87, and 114-115 (NA).

The protein belongs to the class I-like SAM-binding methyltransferase superfamily. MenG/UbiE family.

The catalysed reaction is a 2-demethylmenaquinol + S-adenosyl-L-methionine = a menaquinol + S-adenosyl-L-homocysteine + H(+). It catalyses the reaction a 2-methoxy-6-(all-trans-polyprenyl)benzene-1,4-diol + S-adenosyl-L-methionine = a 5-methoxy-2-methyl-3-(all-trans-polyprenyl)benzene-1,4-diol + S-adenosyl-L-homocysteine + H(+). It functions in the pathway quinol/quinone metabolism; menaquinone biosynthesis; menaquinol from 1,4-dihydroxy-2-naphthoate: step 2/2. Its pathway is cofactor biosynthesis; ubiquinone biosynthesis. In terms of biological role, methyltransferase required for the conversion of demethylmenaquinol (DMKH2) to menaquinol (MKH2) and the conversion of 2-polyprenyl-6-methoxy-1,4-benzoquinol (DDMQH2) to 2-polyprenyl-3-methyl-6-methoxy-1,4-benzoquinol (DMQH2). This chain is Ubiquinone/menaquinone biosynthesis C-methyltransferase UbiE, found in Zymomonas mobilis subsp. mobilis (strain ATCC 31821 / ZM4 / CP4).